We begin with the raw amino-acid sequence, 334 residues long: MDQSLIQEILEIVEQAAIASATLSGKGLKDEADALAVDAMRKRMNQINMQGKIVIGEGERDEAPMLYIGEEVGTGNGPGVDFAVDPCEGTNLCAYSQRGSMAVLAASDRGGLFNAPDFYMKKLAAPPAAKGKVDIRKSATENIKILSECLGLAPDELTIVVMDRARHKDLIAEIRATGARIQPISDGDVQAAIACGFAGTGTHCLMGIGAAPEGVISAAAMRALGGHFQGQLVYDPAIAQTSEWADMTKEGNLQRLAEMGITDPDKVYEASELACGEHVVFAGSGITDGLLFNGVKFEADCTRTSSLVISNMNNTCSFTTTIHMKDGAQSIALN.

Residues Asp33, Glu57, Asp85, and Glu88 each contribute to the Mn(2+) site. Substrate-binding positions include 88–90 (EGT), Tyr119, 164–166 (RAR), and 186–188 (DGD). Glu213 lines the Mn(2+) pocket.

It belongs to the FBPase class 2 family. In terms of assembly, homotetramer. Mn(2+) serves as cofactor.

It carries out the reaction beta-D-fructose 1,6-bisphosphate + H2O = beta-D-fructose 6-phosphate + phosphate. It catalyses the reaction D-sedoheptulose 1,7-bisphosphate + H2O = D-sedoheptulose 7-phosphate + phosphate. It participates in carbohydrate biosynthesis; Calvin cycle. In terms of biological role, catalyzes the hydrolysis of fructose 1,6-bisphosphate (Fru 1,6-P2) and sedoheptulose 1,7-bisphosphate (Sed 1,7-P2) to fructose 6-phosphate and sedoheptulose 7-phosphate, respectively. This is D-fructose 1,6-bisphosphatase class 2/sedoheptulose 1,7-bisphosphatase from Synechococcus sp. (strain CC9902).